Here is a 704-residue protein sequence, read N- to C-terminus: Polyribonucleotide nucleotidyltransferase (704 aa).

Residues Asp488 and Asp494 each coordinate Mg(2+). Residues 555-614 enclose the KH domain; that stretch reads PRITTIKINPEKIRDVIGKGGATIRALTEETGTTIELDDDGTVKIASSNGEATKEAIRRI. The S1 motif domain occupies 624–692; sequence GTVYNGKVVR…RQGRVRLSMK (69 aa).

It belongs to the polyribonucleotide nucleotidyltransferase family. As to quaternary structure, component of the RNA degradosome, which is a multiprotein complex involved in RNA processing and mRNA degradation. The cofactor is Mg(2+).

The protein resides in the cytoplasm. The catalysed reaction is RNA(n+1) + phosphate = RNA(n) + a ribonucleoside 5'-diphosphate. Involved in mRNA degradation. Catalyzes the phosphorolysis of single-stranded polyribonucleotides processively in the 3'- to 5'-direction. This is Polyribonucleotide nucleotidyltransferase from Shewanella pealeana (strain ATCC 700345 / ANG-SQ1).